The following is a 1051-amino-acid chain: MAPVRKSRSVNKRFTNETSPRKDAGKSKKNKLRKKLSDKLGPQWTRLELERFYDAYRKHGQEWRRVAAAIRNSRSVDMVEALFNMNRAYLSLPEGTASVAGLIAMMTDHYSVMEGSGSEGEGHDASEVPRKQQKRKRAKPQRSDSPEEVDIQQSIGSPDGCLTFLKQARANGTQRHATGKRTPRVPVQTSFMRDDREGSTPPNKRARKQFDANDDVAHFLALALTDASRRGGSPKVSESPNRRTELSDSSPIKSWGKMSRTRKSQSKHCGSSIFEEWMESSRERKLDSDKDTTLLMDMERAGEMEAPRKGKRVYKKRVKVEEAECNDSDDNGEACSATQGLRSKSQRRKAAIEASREKYSPRSPKKRDDKHTSGAFDALQALAELSASMLPANLMESELSAQLKEERTEYDMDEKSSTPEATSTSSHGEKANVEPDDSLLHAISSVENANKRKSKPSRLVSTDCDDVPTGKLQPQTSGSLRKRKPKVLGDEAPAEFSQNKSINKKELPQDENNMKSLVKTKRAGQVPAQSKQMKTVKALEESAITSDKKRPGMDIVASPKQVSDSGPTSLSQKPPNRRKKSLQKSLQEKAKSSETTHKAARSSRSLSEQELLLKDKLATSLSFPFARRRCIFEWFYSAIDHPWFSKMEFVDYLNHVGLGHIPRLTRLEWSVIKSSLGRPRRFSERFLHEEREKLKQYRESVRKHYTELRTGAREGLPTDLARPLAVGNRVIAIHPKTREIHDGKILTVDHNKCNVLFDDLGVELVMDIDCMPLNPLEYMPEGLRRQIDKCLSMKKEAQLSGNTNLGVSVLFPPCGLENVSFSMNPPLNQGDMIAPILHGKVSSNTSSPRQTNHSYITTYNKAKEAEIQRAQALQHALDEKEMEPEMLEIVKGSKTRAQAMVDAAIKAASSVKEGEDVNTMIQEALELVGKNQLLRSSMVKHHEHVNGSIEHHHNPSPSNGSEPVANNDLNSQDGSEKNAQMPSELITSCVATWLMIQMCTERQYPPADVAQLIDAAVTSLQPRCPQNLPIYREIQTCMGRIKTQIMSLVPT.

2 stretches are compositionally biased toward basic residues: residues 1–11 and 27–36; these read MAPVRKSRSVN and SKKNKLRKKL. The tract at residues 1–37 is disordered; sequence MAPVRKSRSVNKRFTNETSPRKDAGKSKKNKLRKKLS. Positions 39 to 93 constitute an SANT domain; that stretch reads KLGPQWTRLELERFYDAYRKHGQEWRRVAAAIRNSRSVDMVEALFNMNRAYLSLP. 6 disordered regions span residues 114 to 158, 170 to 210, 225 to 293, 323 to 375, 397 to 605, and 948 to 981; these read EGSG…IGSP, ANGT…RKQF, TDAS…KDTT, AECN…TSGA, SELS…SSRS, and SIEHHHNPSPSNGSEPVANNDLNSQDGSEKNAQM. Over residues 120 to 130 the composition is skewed to basic and acidic residues; it reads GEGHDASEVPR. Basic residues predominate over residues 131 to 140; the sequence is KQQKRKRAKP. Residues 279–293 show a composition bias toward basic and acidic residues; the sequence is ESSRERKLDSDKDTT. Positions 323–332 are enriched in acidic residues; it reads AECNDSDDNG. Composition is skewed to basic and acidic residues over residues 350–372 and 403–417; these read AAIEASREKYSPRSPKKRDDKHT and LKEERTEYDMDEKSS. The segment covering 560–574 has biased composition (polar residues); sequence KQVSDSGPTSLSQKP. A compositionally biased stretch (basic and acidic residues) spans 586–597; the sequence is LQEKAKSSETTH. The span at 967 to 981 shows a compositional bias: polar residues; sequence NDLNSQDGSEKNAQM.

Interacts with SNL1 (via PAH3). As to expression, expressed ubiquitously in vegetative and reproductive tissues.

It is found in the nucleus. The protein is Protein ALWAYS EARLY 2 (ALY2) of Arabidopsis thaliana (Mouse-ear cress).